We begin with the raw amino-acid sequence, 731 residues long: SUN domain-containing protein 2 (731 aa).

Disordered stretches follow at residues 1–69 (MSRR…SHTS) and 106–142 (SGDLRGRRRRGTGGSESSKANGLTAESKASEDFFGSS). Residues 1-128 (MSRRSQRLTR…GSESSKANGL (128 aa)) are LMNA-binding. The Nuclear portion of the chain corresponds to 1-226 (MSRRSQRLTR…SRHFSLNLKS (226 aa)). The residue at position 12 (Ser-12) is a Phosphoserine. Over residues 18 to 33 (GGSSSSGASSVAGSQG) the composition is skewed to low complexity. Phosphoserine occurs at positions 39 and 55. At Thr-117 the chain carries Phosphothreonine. Phosphoserine occurs at positions 120, 123, and 147. Residues 227–247 (FLWFLLLLLLLTGLTYGAWHF) traverse the membrane as a helical segment. Topologically, residues 248 to 731 (YPLGLQTLQP…RFRVHGEPAH (484 aa)) are perinuclear space. Coiled coils occupy residues 396-452 (QESE…VADE) and 486-519 (RSGLLQRDEMHAQLQELENKILTKMAEMQGKSAR). Residues 521–731 (AAASLGQILQ…RFRVHGEPAH (211 aa)) are sufficient for interaction with SYNE1 and SYNE2. Residues 569 to 730 (GASVISTRCS…YRFRVHGEPA (162 aa)) form the SUN domain. N-linked (GlcNAc...) asparagine glycosylation is present at Asn-650.

Core component of the LINC complex which is composed of inner nuclear membrane SUN domain-containing proteins coupled to outer nuclear membrane KASH domain-containing nesprins. SUN and KASH domain-containing proteins seem to bind each other promiscuously; however, differentially expression of LINC complex constituents is giving rise to specific assemblies. At least SUN1/2-containing core LINC complexes are proposed to be hexameric composed of three protomers of each KASH and SUN domain-containing protein. Interacts with SYNE2; the SUN2:SYNE2/KASH2 LINC complex is a heterohexamer; the homotrimeric cloverleave-like conformation of the SUN domain is a prerequisite for LINC complex formation in which three separate SYNE2/KASH2 peptides bind at the interface of adjacent SUN domains. Component of a probable SUN2:KASH5 LINC complex. Interacts with SYNE1 and SYNE3; probably forming respective LINC complexes. Interacts with A-type lamin. Interaction with lamins B1 and C is hardly detectable. Interacts with EMD. Interacts with RAB5A. Interacts with TMEM43 and TMEM201. Interacts with IRAG2. The disulfide bond with SYNE2 is required for stability of the SUN2:SYNE2/KASH2 LINC complex under tensile forces though not required for the interaction. The disulfide bond is proposed to be conserved in LINC complexes involved in force transmission. As to expression, highly expressed in heart, placenta and muscle.

The protein localises to the nucleus inner membrane. It localises to the nucleus envelope. The protein resides in the endosome membrane. Functionally, as a component of the LINC (LInker of Nucleoskeleton and Cytoskeleton) complex, involved in the connection between the nuclear lamina and the cytoskeleton. The nucleocytoplasmic interactions established by the LINC complex play an important role in the transmission of mechanical forces across the nuclear envelope and in nuclear movement and positioning. Specifically, SYNE2 and SUN2 assemble in arrays of transmembrane actin-associated nuclear (TAN) lines which are bound to F-actin cables and couple the nucleus to retrograde actin flow during actin-dependent nuclear movement. Required for interkinetic nuclear migration (INM) and essential for nucleokinesis and centrosome-nucleus coupling during radial neuronal migration in the cerebral cortex and during glial migration. Required for nuclear migration in retinal photoreceptor progenitors implicating association with cytoplasmic dynein-dynactin and kinesin motor complexes, and probably B-type lamins; SUN1 and SUN2 seem to act redundantly. The SUN1/2:KASH5 LINC complex couples telomeres to microtubules during meiosis; SUN1 and SUN2 seem to act at least partial redundantly. Anchors chromosome movement in the prophase of meiosis and is involved in selective gene expression of coding and non-coding RNAs needed for gametogenesis. Required for telomere attachment to nuclear envelope and gametogenesis. May also function on endocytic vesicles as a receptor for Rab5-GDP and participate in the activation of Rab5. The sequence is that of SUN domain-containing protein 2 from Mus musculus (Mouse).